A 254-amino-acid polypeptide reads, in one-letter code: UPF0246 protein Fphi_1075 (254 aa).

It belongs to the UPF0246 family.

The chain is UPF0246 protein Fphi_1075 from Francisella philomiragia subsp. philomiragia (strain ATCC 25017 / CCUG 19701 / FSC 153 / O#319-036).